A 566-amino-acid polypeptide reads, in one-letter code: Arginine--tRNA ligase (566 aa).

A 'HIGH' region motif is present at residues 121–131 (PNIAKPMSMGH).

This sequence belongs to the class-I aminoacyl-tRNA synthetase family. In terms of assembly, monomer.

The protein localises to the cytoplasm. It catalyses the reaction tRNA(Arg) + L-arginine + ATP = L-arginyl-tRNA(Arg) + AMP + diphosphate. In Oenococcus oeni (strain ATCC BAA-331 / PSU-1), this protein is Arginine--tRNA ligase.